Reading from the N-terminus, the 76-residue chain is Large ribosomal subunit protein uL29 (76 aa).

Belongs to the universal ribosomal protein uL29 family.

The sequence is that of Large ribosomal subunit protein uL29 from Gloeothece citriformis (strain PCC 7424) (Cyanothece sp. (strain PCC 7424)).